The following is a 396-amino-acid chain: NADH-quinone oxidoreductase subunit D (396 aa).

This sequence belongs to the complex I 49 kDa subunit family. As to quaternary structure, NDH-1 is composed of 14 different subunits. Subunits NuoB, C, D, E, F, and G constitute the peripheral sector of the complex.

The protein resides in the cell inner membrane. The catalysed reaction is a quinone + NADH + 5 H(+)(in) = a quinol + NAD(+) + 4 H(+)(out). Functionally, NDH-1 shuttles electrons from NADH, via FMN and iron-sulfur (Fe-S) centers, to quinones in the respiratory chain. The immediate electron acceptor for the enzyme in this species is believed to be ubiquinone. Couples the redox reaction to proton translocation (for every two electrons transferred, four hydrogen ions are translocated across the cytoplasmic membrane), and thus conserves the redox energy in a proton gradient. The sequence is that of NADH-quinone oxidoreductase subunit D from Brucella anthropi (strain ATCC 49188 / DSM 6882 / CCUG 24695 / JCM 21032 / LMG 3331 / NBRC 15819 / NCTC 12168 / Alc 37) (Ochrobactrum anthropi).